The sequence spans 335 residues: Methionine import ATP-binding protein MetN 2 (335 aa).

Residues 2-242 (IEFHDVHKTY…PQHPTTRRFV (241 aa)) enclose the ABC transporter domain. 38 to 45 (GHSGAGKS) provides a ligand contact to ATP.

Belongs to the ABC transporter superfamily. Methionine importer (TC 3.A.1.24) family. As to quaternary structure, the complex is composed of two ATP-binding proteins (MetN), two transmembrane proteins (MetI) and a solute-binding protein (MetQ).

The protein resides in the cell inner membrane. The enzyme catalyses L-methionine(out) + ATP + H2O = L-methionine(in) + ADP + phosphate + H(+). It carries out the reaction D-methionine(out) + ATP + H2O = D-methionine(in) + ADP + phosphate + H(+). Part of the ABC transporter complex MetNIQ involved in methionine import. Responsible for energy coupling to the transport system. The polypeptide is Methionine import ATP-binding protein MetN 2 (Pseudomonas aeruginosa (strain UCBPP-PA14)).